Consider the following 576-residue polypeptide: Arginine--tRNA ligase (576 aa).

A 'HIGH' region motif is present at residues 122 to 132 (PNVAKEMHVGH).

Belongs to the class-I aminoacyl-tRNA synthetase family. As to quaternary structure, monomer.

The protein resides in the cytoplasm. The enzyme catalyses tRNA(Arg) + L-arginine + ATP = L-arginyl-tRNA(Arg) + AMP + diphosphate. This Hamiltonella defensa subsp. Acyrthosiphon pisum (strain 5AT) protein is Arginine--tRNA ligase.